The sequence spans 229 residues: RNA pyrophosphohydrolase (229 aa).

In terms of domain architecture, Nudix hydrolase spans 6–149 (GFRPNVGIIL…KRGVYEMALT (144 aa)). The Nudix box motif lies at 38 to 59 (GGIDRGETPEQAMFRELHEEVG). The segment at 191 to 229 (KPGMELPPGASFDPDPQNSVPAPLEALPTLPVPKKPLDA) is disordered. The segment covering 220–229 (LPVPKKPLDA) has biased composition (pro residues).

Belongs to the Nudix hydrolase family. RppH subfamily. A divalent metal cation serves as cofactor.

In terms of biological role, accelerates the degradation of transcripts by removing pyrophosphate from the 5'-end of triphosphorylated RNA, leading to a more labile monophosphorylated state that can stimulate subsequent ribonuclease cleavage. This Acidovorax ebreus (strain TPSY) (Diaphorobacter sp. (strain TPSY)) protein is RNA pyrophosphohydrolase.